A 1923-amino-acid chain; its full sequence is Nuclear pore complex protein GP210 (1923 aa).

The signal sequence occupies residues 1-22 (MVPVSFCFFFLLLLLSAGESSS). N-linked (GlcNAc...) asparagine glycosylation is found at N73, N117, N289, N609, N863, N903, N967, N982, N1171, N1199, N1550, N1568, and N1743. A BIG2 domain is found at 1152–1205 (IFLVPGASYVLTIEGGPTMNVSVDYTTVDNEVAKIEKSGRLYATSPGNTTIYAT). The helical transmembrane segment at 1829 to 1849 (SVLLKILWGVLVLVVSVIILM) threads the bilayer.

This sequence belongs to the NUP210 family. Part of the nuclear pore complex (NPC). The NPC has an eight-fold symmetrical structure comprising a central transport channel and two rings, the cytoplasmic and nuclear rings, to which eight filaments are attached. The cytoplasmic filaments have loose ends, while the nuclear filaments are joined in a distal ring, forming a nuclear basket. NPCs are highly dynamic in configuration and composition, and can be devided in 3 subcomplexes, the NUP62 subcomplex, the NUP107-160 subcomplex and the NUP93 subcomplex, containing approximately 30 different nucleoporin proteins.

The protein resides in the nucleus envelope. Its subcellular location is the nucleus membrane. It localises to the nucleus. The protein localises to the nuclear pore complex. This chain is Nuclear pore complex protein GP210, found in Arabidopsis thaliana (Mouse-ear cress).